The primary structure comprises 119 residues: Ribonuclease P protein component (119 aa).

Belongs to the RnpA family. Consists of a catalytic RNA component (M1 or rnpB) and a protein subunit.

The catalysed reaction is Endonucleolytic cleavage of RNA, removing 5'-extranucleotides from tRNA precursor.. RNaseP catalyzes the removal of the 5'-leader sequence from pre-tRNA to produce the mature 5'-terminus. It can also cleave other RNA substrates such as 4.5S RNA. The protein component plays an auxiliary but essential role in vivo by binding to the 5'-leader sequence and broadening the substrate specificity of the ribozyme. In Nitrosomonas europaea (strain ATCC 19718 / CIP 103999 / KCTC 2705 / NBRC 14298), this protein is Ribonuclease P protein component.